We begin with the raw amino-acid sequence, 283 residues long: 5'-nucleotidase SurE (283 aa).

Residues Asp14, Asp15, Ser47, and Asn105 each coordinate a divalent metal cation.

Belongs to the SurE nucleotidase family. It depends on a divalent metal cation as a cofactor.

It is found in the cytoplasm. It catalyses the reaction a ribonucleoside 5'-phosphate + H2O = a ribonucleoside + phosphate. Its function is as follows. Nucleotidase that shows phosphatase activity on nucleoside 5'-monophosphates. The sequence is that of 5'-nucleotidase SurE from Chlamydia muridarum (strain MoPn / Nigg).